The chain runs to 656 residues: DNA ligase (656 aa).

NAD(+) is bound by residues 32 to 36 and 81 to 82; these read DAVYD and SL. Lysine 112 serves as the catalytic N6-AMP-lysine intermediate. 3 residues coordinate NAD(+): arginine 133, glutamate 167, and lysine 306. 4 residues coordinate Zn(2+): cysteine 400, cysteine 403, cysteine 416, and cysteine 421. The region spanning 577–656 is the BRCT domain; that stretch reads ESSSVFSNKT…ELLKRLKEFD (80 aa).

It belongs to the NAD-dependent DNA ligase family. LigA subfamily. Requires Mg(2+) as cofactor. It depends on Mn(2+) as a cofactor.

It catalyses the reaction NAD(+) + (deoxyribonucleotide)n-3'-hydroxyl + 5'-phospho-(deoxyribonucleotide)m = (deoxyribonucleotide)n+m + AMP + beta-nicotinamide D-nucleotide.. In terms of biological role, DNA ligase that catalyzes the formation of phosphodiester linkages between 5'-phosphoryl and 3'-hydroxyl groups in double-stranded DNA using NAD as a coenzyme and as the energy source for the reaction. It is essential for DNA replication and repair of damaged DNA. The protein is DNA ligase of Helicobacter pylori (strain Shi470).